A 1080-amino-acid polypeptide reads, in one-letter code: Adenylate cyclase type 7 (1080 aa).

Topologically, residues 1 to 33 are cytoplasmic; it reads MPAKGRYFLNEGEEGPDQDALYEKYQLTSQHGP. 6 helical membrane passes run 34–54, 63–83, 95–117, 122–142, 147–167, and 176–196; these read LLLTLLLVAATACVALIIIAF, QAILGMAFLVLAVFAALSVLM, ALALLTWACLVALGYVLVFDAWT, AWEQVPFFLFIVFVVYTLLPF, AVAVGAVSTASHLLVLGSLMG, and VGLQLLANAVIFLCGNLTGAF. Topologically, residues 197–594 are cytoplasmic; the sequence is HKHQMQDASR…YRLAPIPRAR (398 aa). Residues 279–406 form the Guanylate cyclase 1 domain; sequence SILYADIVGF…HDVSLANRME (128 aa). Aspartate 284, isoleucine 285, and aspartate 328 together coordinate Mg(2+). ATP-binding positions include 284 to 289, 326 to 328, and arginine 372; these read DIVGFT and LGD. The disordered stretch occupies residues 454–474; it reads DPRSQQPPPPSQHLPRPKGDA. Positions 477–482 are mediates regulation of adenylate cyclase activity by C5 alpha-induced G- beta and gamma pathway; that stretch reads KMRASV. Residues 491-499 are mediates regulation of adenylate cyclase activity by sphingosine 1-phosphate-induced G alpha 13 pathway; it reads WGAARPFAH. A disordered region spans residues 504–546; it reads ESVSSGETHVPNGRRPKSVPQRHRRTPDRSMSPKGRSEDDSYD. Positions 506–584 are modulates adenylate cyclase activity by modulating the binding of G(s)alpha to the high-affinity G(s)alpha binding site in 7C1a/7C2; it reads VSSGETHVPN…IFLEKGFERE (79 aa). The span at 515-529 shows a compositional bias: basic residues; it reads NGRRPKSVPQRHRRT. The next 3 helical transmembrane spans lie at 595-615, 620-640, and 669-688; these read HDFACASLIFVCILLVHVLLM, ALGVSFGLVACVLGLVLGLCF, and LTLAVLTIGSLLTVAIINLP. Asparagine 701 carries an N-linked (GlcNAc...) asparagine glycan. Transmembrane regions (helical) follow at residues 718–737 and 746–773; these read PLPYYTCSCVLGFIACSVFL and VLLTVALVAYLVLFNLSPCWQWDCCGQG. 2 N-linked (GlcNAc...) asparagine glycosylation sites follow: asparagine 776 and asparagine 781. The helical transmembrane segment at 794-814 threads the bilayer; sequence DLKTMTNFYLVLFYITLLTLS. Topologically, residues 815 to 1080 are cytoplasmic; sequence RQIDYYCRLD…TAKFQGLGLN (266 aa). The Guanylate cyclase 2 domain occupies 879-1023; the sequence is CVMFASVPDF…NTVNVASRME (145 aa). ATP-binding positions include lysine 931, 1010–1012, 1017–1021, and lysine 1057; these read DIW and NVASR.

This sequence belongs to the adenylyl cyclase class-4/guanylyl cyclase family. Requires Mg(2+) as cofactor. The cofactor is Mn(2+). Post-translationally, phosphorylated by PRKCD.

The protein localises to the membrane. It catalyses the reaction ATP = 3',5'-cyclic AMP + diphosphate. Its activity is regulated as follows. Activated by the G protein alpha subunit. Activated by the G protein beta and gamma subunit complex. Activated by GNA13 and GNA12. Ethanol and phorbol 12,13-dibutanoate significantly potentiate adenylate cyclase activity generated in response to the activation of the prostanoid receptor by the agonist prostaglandin E1(1-) in a PKC-dependent manner. Inhibited by lithium. Its function is as follows. Catalyzes the formation of cAMP in response to activation of G protein-coupled receptors. Functions in signaling cascades activated namely by thrombin and sphingosine 1-phosphate and mediates regulation of cAMP synthesis through synergistic action of the stimulatory G alpha protein with GNA13. Also, during inflammation, mediates zymosan-induced increase intracellular cAMP, leading to protein kinase A pathway activation in order to modulate innate immune responses through heterotrimeric G proteins G(12/13). Functions in signaling cascades activated namely by dopamine and C5 alpha chain and mediates regulation of cAMP synthesis through synergistic action of the stimulatory G protein with G beta:gamma complex. Functions, through cAMP response regulation, to keep inflammation under control during bacterial infection by sensing the presence of serum factors, such as the bioactive lysophospholipid (LPA) that regulate LPS-induced TNF-alpha production. However, it is also required for the optimal functions of B and T cells during adaptive immune responses by regulating cAMP synthesis in both B and T cells. This chain is Adenylate cyclase type 7, found in Homo sapiens (Human).